Consider the following 339-residue polypeptide: Protein-arginine kinase (339 aa).

The 229-residue stretch at 14–242 (IVINSNISLS…LNVISEEKKF (229 aa)) folds into the Phosphagen kinase C-terminal domain. ATP-binding positions include 17-21 (NSNIS), 164-168 (RASVN), and 195-200 (KGLYEE).

It belongs to the ATP:guanido phosphotransferase family.

The catalysed reaction is L-arginyl-[protein] + ATP = N(omega)-phospho-L-arginyl-[protein] + ADP + H(+). Its function is as follows. Catalyzes the specific phosphorylation of arginine residues in proteins. This chain is Protein-arginine kinase, found in Clostridium botulinum (strain Eklund 17B / Type B).